A 396-amino-acid polypeptide reads, in one-letter code: Methionine import ATP-binding protein MetN 2 (396 aa).

The 240-residue stretch at 41–280 (VSFELVGKVF…PRHGATRALL (240 aa)) folds into the ABC transporter domain. 77–84 (GRSGAGKS) is a binding site for ATP.

The protein belongs to the ABC transporter superfamily. Methionine importer (TC 3.A.1.24) family. The complex is composed of two ATP-binding proteins (MetN), two transmembrane proteins (MetI) and a solute-binding protein (MetQ).

It localises to the cell inner membrane. The enzyme catalyses L-methionine(out) + ATP + H2O = L-methionine(in) + ADP + phosphate + H(+). It carries out the reaction D-methionine(out) + ATP + H2O = D-methionine(in) + ADP + phosphate + H(+). Part of the ABC transporter complex MetNIQ involved in methionine import. Responsible for energy coupling to the transport system. The polypeptide is Methionine import ATP-binding protein MetN 2 (Burkholderia mallei (strain ATCC 23344)).